Here is a 98-residue protein sequence, read N- to C-terminus: Defensin (98 aa).

Cystine bridges form between cysteine 61–cysteine 88, cysteine 74–cysteine 94, and cysteine 78–cysteine 96.

This sequence belongs to the invertebrate defensin family. Type 1 subfamily.

This chain is Defensin, found in Mamestra brassicae (Cabbage moth).